A 195-amino-acid chain; its full sequence is UPF0301 protein Bpro_1142 (195 aa).

The protein belongs to the UPF0301 (AlgH) family.

The sequence is that of UPF0301 protein Bpro_1142 from Polaromonas sp. (strain JS666 / ATCC BAA-500).